The primary structure comprises 34 residues: IRCSGSRDCYSPCMKQTGCPNAKCINKSCKCYGC.

4 cysteine pairs are disulfide-bonded: cysteine 3–cysteine 24, cysteine 9–cysteine 29, cysteine 13–cysteine 31, and cysteine 19–cysteine 34. Cysteine amide is present on cysteine 34.

It belongs to the short scorpion toxin superfamily. Potassium channel inhibitor family. Alpha-KTx 06 subfamily. In terms of tissue distribution, expressed by the venom gland.

The protein resides in the secreted. Functionally, antagonist of Kv1/KCNA potassium channels. Shows a weak interaction with muscle-type nicotinic acetylcholine receptors (nAChR), since it inhibits alpha-bungarotoxin binding to both muscle-type nAChR from T.californica (IC(50)=490 nM). This suggests it probably weakly inhibits nAChR. The polypeptide is Potassium channel toxin alpha-KTx 6.13 (Heterometrus spinifer (Asia giant forest scorpion)).